The following is a 690-amino-acid chain: Eukaryotic translation initiation factor 3 subunit B (690 aa).

Basic and acidic residues predominate over residues 1-11 (MAKKKSEEHSG). The segment at 1–36 (MAKKKSEEHSGADANDSDYQEEPNFEDPPGFVDNIS) is disordered. A compositionally biased stretch (acidic residues) spans 15–25 (NDSDYQEEPNF). Residues 57–141 (SVVVVDNIPK…HTFAVNLFTD (85 aa)) form the RRM domain. WD repeat units follow at residues 207–246 (TRER…KIQK), 293–331 (DGMS…LLDL), 334–369 (IKIP…TLME), 442–484 (EIRE…KPSL), and 530–575 (PDHF…IKRT). Positions 595–645 (EEKQKEIKKNLKKYYAAFEQKDRLRLTRASKELLEKRSQLRETFMEYRNKR) form a coiled coil.

It belongs to the eIF-3 subunit B family. Component of the eukaryotic translation initiation factor 3 (eIF-3) complex. The eIF-3 complex interacts with pix. Interacts with mxt.

It is found in the cytoplasm. Its function is as follows. RNA-binding component of the eukaryotic translation initiation factor 3 (eIF-3) complex, which is involved in protein synthesis of a specialized repertoire of mRNAs and, together with other initiation factors, stimulates binding of mRNA and methionyl-tRNAi to the 40S ribosome. The eIF-3 complex specifically targets and initiates translation of a subset of mRNAs involved in cell proliferation. The chain is Eukaryotic translation initiation factor 3 subunit B from Drosophila simulans (Fruit fly).